Reading from the N-terminus, the 215-residue chain is Thiopurine S-methyltransferase (215 aa).

S-adenosyl-L-methionine contacts are provided by W10, L45, E66, and R123.

This sequence belongs to the class I-like SAM-binding methyltransferase superfamily. TPMT family.

The protein resides in the cytoplasm. The enzyme catalyses S-adenosyl-L-methionine + a thiopurine = S-adenosyl-L-homocysteine + a thiopurine S-methylether.. The polypeptide is Thiopurine S-methyltransferase (Pseudomonas putida (strain W619)).